The following is a 474-amino-acid chain: Glutamate--tRNA ligase (474 aa).

The 'HIGH' region motif lies at 9–19; that stretch reads PSPTGYLHVGG. The 'KMSKS' region signature appears at 240 to 244; it reads KLSKR. An ATP-binding site is contributed by K243.

This sequence belongs to the class-I aminoacyl-tRNA synthetase family. Glutamate--tRNA ligase type 1 subfamily. As to quaternary structure, monomer.

The protein localises to the cytoplasm. It catalyses the reaction tRNA(Glu) + L-glutamate + ATP = L-glutamyl-tRNA(Glu) + AMP + diphosphate. Functionally, catalyzes the attachment of glutamate to tRNA(Glu) in a two-step reaction: glutamate is first activated by ATP to form Glu-AMP and then transferred to the acceptor end of tRNA(Glu). In Vibrio vulnificus (strain CMCP6), this protein is Glutamate--tRNA ligase.